Here is a 277-residue protein sequence, read N- to C-terminus: MHTMTTLLKKMNEQEKLVMLTAYDYPSAKLAESAGVDLILVGDSLGMVVLGYDSTIPVTMEDMLHHSKAVRRGAQHTFVVVDMPFASYHGDFDRTLQAASRLFQEGRADAIKLEGAGDVLQTIERLTQVGMPCVAHLGLTPQSVGVLEGYKVQGKSLEAAETLLQDSLAAERAGAKMLVLECVPHQLAKRIAEELTIPVIGIGAGADVDGQVLVYHDVLKYGVDRLPKFVQAYADLNEVATDAIRSYVEETKNGHFPQERHTFTMDESLLDSLYGGK.

Residues Asp-43 and Asp-82 each contribute to the Mg(2+) site. 3-methyl-2-oxobutanoate-binding positions include 43–44 (DS), Asp-82, and Lys-112. Residue Glu-114 coordinates Mg(2+). Catalysis depends on Glu-181, which acts as the Proton acceptor.

The protein belongs to the PanB family. In terms of assembly, homodecamer; pentamer of dimers. It depends on Mg(2+) as a cofactor.

It is found in the cytoplasm. The catalysed reaction is 3-methyl-2-oxobutanoate + (6R)-5,10-methylene-5,6,7,8-tetrahydrofolate + H2O = 2-dehydropantoate + (6S)-5,6,7,8-tetrahydrofolate. It functions in the pathway cofactor biosynthesis; (R)-pantothenate biosynthesis; (R)-pantoate from 3-methyl-2-oxobutanoate: step 1/2. In terms of biological role, catalyzes the reversible reaction in which hydroxymethyl group from 5,10-methylenetetrahydrofolate is transferred onto alpha-ketoisovalerate to form ketopantoate. The chain is 3-methyl-2-oxobutanoate hydroxymethyltransferase from Exiguobacterium sp. (strain ATCC BAA-1283 / AT1b).